The sequence spans 388 residues: Processive diacylglycerol beta-glucosyltransferase (388 aa).

Belongs to the glycosyltransferase 28 family. UgtP subfamily.

Its subcellular location is the cell membrane. It catalyses the reaction a 1,2-diacyl-3-O-(beta-D-glucopyranosyl)-sn-glycerol + UDP-alpha-D-glucose = a 1,2-diacyl-3-O-(beta-D-Glc-(1-&gt;6)-beta-D-Glc)-sn-glycerol + UDP + H(+). It carries out the reaction a 1,2-diacyl-3-O-(beta-D-Glc-(1-&gt;6)-beta-D-Glc)-sn-glycerol + UDP-alpha-D-glucose = a 1,2-diacyl-3-O-(beta-D-Glc-(1-&gt;6)-beta-D-Glc-(1-&gt;6)-beta-D-Glc)-sn-glycerol + UDP + H(+). The catalysed reaction is a 1,2-diacyl-sn-glycerol + UDP-alpha-D-glucose = a 1,2-diacyl-3-O-(beta-D-glucopyranosyl)-sn-glycerol + UDP + H(+). Its pathway is glycolipid metabolism; diglucosyl-diacylglycerol biosynthesis. Functionally, processive glucosyltransferase involved in the biosynthesis of both the bilayer- and non-bilayer-forming membrane glucolipids. Is able to successively transfer up to three glucosyl residues to diacylglycerol (DAG), thereby catalyzing the formation of beta-monoglucosyl-DAG (3-O-(beta-D-glucopyranosyl)-1,2-diacyl-sn-glycerol), beta-diglucosyl-DAG (3-O-(beta-D-glucopyranosyl-beta-(1-&gt;6)-D-glucopyranosyl)-1,2-diacyl-sn-glycerol) and beta-triglucosyl-DAG (3-O-(beta-D-glucopyranosyl-beta-(1-&gt;6)-D-glucopyranosyl-beta-(1-&gt;6)-D-glucopyranosyl)-1,2-diacyl-sn-glycerol). Beta-diglucosyl-DAG is the predominant glycolipid found in Bacillales and is also used as a membrane anchor for lipoteichoic acid (LTA). This Bacillus cereus (strain G9842) protein is Processive diacylglycerol beta-glucosyltransferase.